Here is a 287-residue protein sequence, read N- to C-terminus: Membrane protein insertase YidC 2 (287 aa).

Positions 1–26 (MKKKKRFKQKLLIASLVIGLVAVLSG) are cleaved as a signal peptide. Cys27 carries N-palmitoyl cysteine lipidation. A lipid anchor (S-diacylglycerol cysteine) is attached at Cys27. The next 5 helical transmembrane spans lie at 65–85 (YAVG…PLMI), 135–155 (MMGC…YQAI), 178–198 (YILP…SMMG), 207–224 (AMIV…GITL), and 228–250 (LALY…NNPF).

The protein belongs to the OXA1/ALB3/YidC family. Type 2 subfamily.

It localises to the cell membrane. In terms of biological role, required for the insertion and/or proper folding and/or complex formation of integral membrane proteins into the membrane. Involved in integration of membrane proteins that insert both dependently and independently of the Sec translocase complex, as well as at least some lipoproteins. This chain is Membrane protein insertase YidC 2, found in Listeria innocua serovar 6a (strain ATCC BAA-680 / CLIP 11262).